The following is a 154-amino-acid chain: NADPH-dependent 7-cyano-7-deazaguanine reductase (154 aa).

A compositionally biased stretch (polar residues) spans 1–21; that stretch reads MPNTDVSSLSMLGQQTETAQS. Residues 1–28 form a disordered region; sequence MPNTDVSSLSMLGQQTETAQSPEEAVLE. The Thioimide intermediate role is filled by Cys-52. The Proton donor role is filled by Asp-59. Residues 74-76 and 93-94 each bind substrate; these read VES and HE.

It belongs to the GTP cyclohydrolase I family. QueF type 1 subfamily.

The protein localises to the cytoplasm. It carries out the reaction 7-aminomethyl-7-carbaguanine + 2 NADP(+) = 7-cyano-7-deazaguanine + 2 NADPH + 3 H(+). It participates in tRNA modification; tRNA-queuosine biosynthesis. Catalyzes the NADPH-dependent reduction of 7-cyano-7-deazaguanine (preQ0) to 7-aminomethyl-7-deazaguanine (preQ1). This chain is NADPH-dependent 7-cyano-7-deazaguanine reductase, found in Rhizobium johnstonii (strain DSM 114642 / LMG 32736 / 3841) (Rhizobium leguminosarum bv. viciae).